Here is a 342-residue protein sequence, read N- to C-terminus: 6-hydroxytryprostatin B O-methyltransferase (342 aa).

Aspartate 201 contacts S-adenosyl-L-methionine. Histidine 244 acts as the Proton acceptor in catalysis.

This sequence belongs to the class I-like SAM-binding methyltransferase superfamily. Cation-independent O-methyltransferase family. Homodimer.

It carries out the reaction 6-hydroxytryprostatin B + S-adenosyl-L-methionine = tryprostatin A + S-adenosyl-L-homocysteine + H(+). It functions in the pathway mycotoxin biosynthesis. In terms of biological role, 6-hydroxytryprostatin B O-methyltransferase; part of the gene cluster that mediates the biosynthesis of fumitremorgins, indole alkaloids that carry not only intriguing chemical structures, but also interesting biological and pharmacological activities. The biosynthesis of fumitremorgin-type alkaloids begins by condensation of the two amino acids L-tryptophan and L-proline to brevianamide F, catalyzed by the non-ribosomal peptide synthetase ftmA. Brevianamide F is then prenylated by the prenyltransferase ftmPT1/ftmB in the presence of dimethylallyl diphosphate, resulting in the formation of tryprostatin B. The three cytochrome P450 monooxygenases, ftmP450-1/ftmC, ftmP450-2/ftmE and ftmP450-3/FtmG, are responsible for the conversion of tryprostatin B to 6-hydroxytryprostatin B, tryprostatin A to fumitremorgin C and fumitremorgin C to 12,13-dihydroxyfumitremorgin C, respectively. The putative methyltransferase ftmMT/ftmD is expected for the conversion of 6-hydroxytryprostatin B to tryprostatin A. FtmPT2/FtmH catalyzes the prenylation of 12,13-dihydroxyfumitre-morgin C in the presence of dimethylallyl diphosphate, resulting in the formation of fumitremorgin B. Fumitremorgin B is further converted to verruculogen by ftmOx1/ftmF via the insertion of an endoperoxide bond between the two prenyl moieties. In some fungal species, verruculogen is further converted to fumitremorgin A, but the enzymes involved in this step have not been identified yet. The sequence is that of 6-hydroxytryprostatin B O-methyltransferase from Aspergillus fumigatus (strain ATCC MYA-4609 / CBS 101355 / FGSC A1100 / Af293) (Neosartorya fumigata).